Here is a 386-residue protein sequence, read N- to C-terminus: MEAVEANTLQQERLQAIAEKRKRQTEIENKRRQLEDDRRQLQHLKSKALRERWLLEGAPSSASEEDEAMKKQMQEDEVKTKELEETIQRLERELESLENSSSVTSTKENLAEAAAPAKEEKKENIPSVQKSPLGTAIAEKKVSSSPMKAVQGTDMMKAAMYSVEITVEKDRVTGETKVLSSTTLLPQNHCVQGIKVYEDELKVVHAVSAEDGALQNGAQPLSSSEVDELLHKADEVTLGEATASGDAPGSATSSQKATPRREITGLQAKPRENSTEGAEPSREQPVTMIFMGYQNVEDENETKKVLGLEGTIKAELVVIEDAESKAEPEGKDHAPPNGTALEPAAAPLQGDEVPGGQKPGTNATEAKEAEPDMDAKKQRCKCCTVM.

A coiled-coil region spans residues 4 to 115; that stretch reads VEANTLQQER…TKENLAEAAA (112 aa). 4 disordered regions span residues 21–40, 51–149, 240–290, and 321–378; these read RKRQTEIENKRRQLEDDRRQ, ERWL…PMKA, EATA…TMIF, and DAES…AKKQ. Basic and acidic residues-rich tracts occupy residues 24–40 and 68–95; these read QTEIENKRRQLEDDRRQ and AMKKQMQEDEVKTKELEETIQRLERELE. Residues 97-116 show a composition bias toward low complexity; that stretch reads LENSSSVTSTKENLAEAAAP. Basic and acidic residues-rich tracts occupy residues 259 to 282, 322 to 334, and 365 to 377; these read PRREITGLQAKPRENSTEGAEPSR, AESKAEPEGKDHA, and EAKEAEPDMDAKK. S-palmitoyl cysteine attachment occurs at residues Cys-380 and Cys-382. A Cysteine methyl ester modification is found at Cys-383. Cys-383 carries S-farnesyl cysteine lipidation. Positions 384–386 are cleaved as a propeptide — removed in mature form; it reads TVM.

This sequence belongs to the paralemmin family. Interacts with dopamine receptor DRD3. In terms of processing, phosphorylated. As to expression, expressed in the lens (at protein level). Highly expressed in forebrain and cerebellum with lower expression in adrenal gland and heart. Expression weak or undetectable in other tissues.

The protein localises to the cell membrane. It localises to the cell projection. It is found in the filopodium membrane. The protein resides in the axon. Its subcellular location is the dendrite. The protein localises to the dendritic spine. It localises to the basolateral cell membrane. It is found in the apicolateral cell membrane. In terms of biological role, involved in plasma membrane dynamics and cell process formation. Isoform 1 and isoform 2 are necessary for axonal and dendritic filopodia induction, for dendritic spine maturation and synapse formation in a palmitoylation-dependent manner. The chain is Paralemmin-1 (PALM) from Gallus gallus (Chicken).